A 275-amino-acid chain; its full sequence is Phosphonoacetaldehyde hydrolase (275 aa).

D15 acts as the Nucleophile in catalysis. D15 and A17 together coordinate Mg(2+). K56 serves as the catalytic Schiff-base intermediate with substrate. Position 189 (D189) interacts with Mg(2+).

This sequence belongs to the HAD-like hydrolase superfamily. PhnX family. Homodimer. The cofactor is Mg(2+).

The enzyme catalyses phosphonoacetaldehyde + H2O = acetaldehyde + phosphate + H(+). Involved in phosphonate degradation. The polypeptide is Phosphonoacetaldehyde hydrolase (Pseudomonas putida (Arthrobacter siderocapsulatus)).